The primary structure comprises 470 residues: ATP synthase subunit beta (470 aa).

157 to 164 (GGAGVGKT) is a binding site for ATP.

This sequence belongs to the ATPase alpha/beta chains family. As to quaternary structure, F-type ATPases have 2 components, CF(1) - the catalytic core - and CF(0) - the membrane proton channel. CF(1) has five subunits: alpha(3), beta(3), gamma(1), delta(1), epsilon(1). CF(0) has three main subunits: a(1), b(2) and c(9-12). The alpha and beta chains form an alternating ring which encloses part of the gamma chain. CF(1) is attached to CF(0) by a central stalk formed by the gamma and epsilon chains, while a peripheral stalk is formed by the delta and b chains.

It is found in the cell inner membrane. It catalyses the reaction ATP + H2O + 4 H(+)(in) = ADP + phosphate + 5 H(+)(out). In terms of biological role, produces ATP from ADP in the presence of a proton gradient across the membrane. The catalytic sites are hosted primarily by the beta subunits. This Geotalea daltonii (strain DSM 22248 / JCM 15807 / FRC-32) (Geobacter daltonii) protein is ATP synthase subunit beta.